A 144-amino-acid chain; its full sequence is Transcription antitermination protein NusB (144 aa).

This sequence belongs to the NusB family.

Its function is as follows. Involved in transcription antitermination. Required for transcription of ribosomal RNA (rRNA) genes. Binds specifically to the boxA antiterminator sequence of the ribosomal RNA (rrn) operons. The protein is Transcription antitermination protein NusB of Paraburkholderia xenovorans (strain LB400).